The sequence spans 65 residues: Large ribosomal subunit protein bL33c (65 aa).

The protein belongs to the bacterial ribosomal protein bL33 family.

The protein resides in the plastid. It is found in the chloroplast. This Gracilaria tenuistipitata var. liui (Red alga) protein is Large ribosomal subunit protein bL33c.